The chain runs to 345 residues: PI-PLC X domain-containing protein 1 (345 aa).

The PI-PLC X-box domain maps to 52-228 (QLWDVPLHHL…QVIVSYEDEA (177 aa)).

As to expression, expressed at highest levels in brain and kidney. Also detected in stomach, thymus and skeletal muscle.

Its subcellular location is the cytoplasm. The polypeptide is PI-PLC X domain-containing protein 1 (Plcxd1) (Mus musculus (Mouse)).